The sequence spans 346 residues: Probable choline kinase 3 (346 aa).

Residues Arg71, Gln207, and Asp224 each coordinate ATP.

Belongs to the choline/ethanolamine kinase family.

It catalyses the reaction choline + ATP = phosphocholine + ADP + H(+). It participates in phospholipid metabolism; phosphatidylcholine biosynthesis; phosphocholine from choline: step 1/1. In terms of biological role, involved in phospholipid biosynthesis. Catalyzes the first step in phosphatidylcholine biosynthesis. In Arabidopsis thaliana (Mouse-ear cress), this protein is Probable choline kinase 3.